A 252-amino-acid chain; its full sequence is 3-dehydroquinate dehydratase (252 aa).

3-dehydroquinate contacts are provided by residues S21, 46–48 (EWR), and R82. Residue H143 is the Proton donor/acceptor of the active site. Catalysis depends on K170, which acts as the Schiff-base intermediate with substrate. 3-dehydroquinate-binding residues include R213, S232, and Q236.

The protein belongs to the type-I 3-dehydroquinase family. As to quaternary structure, homodimer.

It carries out the reaction 3-dehydroquinate = 3-dehydroshikimate + H2O. The protein operates within metabolic intermediate biosynthesis; chorismate biosynthesis; chorismate from D-erythrose 4-phosphate and phosphoenolpyruvate: step 3/7. In terms of biological role, involved in the third step of the chorismate pathway, which leads to the biosynthesis of aromatic amino acids. Catalyzes the cis-dehydration of 3-dehydroquinate (DHQ) and introduces the first double bond of the aromatic ring to yield 3-dehydroshikimate. The polypeptide is 3-dehydroquinate dehydratase (Escherichia coli (strain SE11)).